The primary structure comprises 94 residues: Protein P19 (94 aa).

Functionally, binds to single-stranded DNA (ssDNA). This is Protein P19 (XIX) from Acinetobacter calcoaceticus (Arthrobacter siderocapsulatus).